The primary structure comprises 508 residues: Probable cytochrome P450 6d5 (508 aa).

Cys453 is a heme binding site.

The protein belongs to the cytochrome P450 family. The cofactor is heme.

The protein localises to the endoplasmic reticulum membrane. Its subcellular location is the microsome membrane. Its function is as follows. May be involved in the metabolism of insect hormones and in the breakdown of synthetic insecticides. This chain is Probable cytochrome P450 6d5 (Cyp6d5), found in Drosophila melanogaster (Fruit fly).